Consider the following 757-residue polypeptide: MSKNSDALLWYHGKITREVAVQVLLRKGGRDGFFLIRDCGNAPEDYVLSMMFRSQILHFQINCLGDNKFSIDNGPIFQGLDMLISYYKVISDGLPCKLVDFCVGKIAPLYALKYGLDTRLHLACEEKNPNTVKELLQDSVIKENVNARSISGLTALHISCSNGDNDIVAMLLNAGADASAIDANGRTPVQVVCFYNHASTLHLLISKGSADFLKRSPNNGWVPLHEAAMRGSLECVKVLLSFNASMYPRSLDGDTPRDLALQYENYNVVEFFDNYPVNQPKTSITQWLHQNLDRNGALIILQNASMADGSFLIRSSIKCHGYYVLTLVYEKKTYHFQIKSRADRWFYIDDGPLFETLPHLVDHYMQYADGLPTLLQFPVPSAENRKRPLPPTPTKNQLKLPVPPSRPIKNNNGLPQPLPYPEFTNESDSDIFTRLECEKEKPLPKLPRPVVNHTEVPNSVNVGQKGDQTMKNNAQQNIILKESISFGKELGVGEFGSVIKGIWLSPGGKEINVAMKTLHKDKMVQGEKEFLREALVMSQLNHPCIVSLLGVCLGPPMILVQELVEMGALLDYLMDYQPEIQEVDLKLWASQIAFGMMYLELKRFVHRDLAARNILLANKKQVKISDFGLSRAVGTGSDYYQAKQGGRWPVRWYAPESINYGTFSTKSDVWSYGITLWEMFTFGDLPYGEMTGNEVVSFLEHCGRLEKPDECPIHTYSIMLSCWHIDPNKRPTFNELHSTFSTDPEYEDVRIYRDRIK.

An SH2 1 domain is found at 10 to 102 (WYHGKITREV…GLPCKLVDFC (93 aa)). ANK repeat units lie at residues 115–147 (GLDT…NVNA), 151–180 (SGLT…DASA), 184–214 (NGRT…DFLK), 219–248 (NGWV…SMYP), and 252–281 (DGDT…NQPK). An SH2 2 domain is found at 287–379 (WLHQNLDRNG…GLPTLLQFPV (93 aa)). Disordered regions lie at residues 381–407 (SAEN…PSRP) and 444–467 (PKLP…QKGD). Residues 455–467 (EVPNSVNVGQKGD) show a composition bias toward polar residues. The 257-residue stretch at 484-740 (ISFGKELGVG…PTFNELHSTF (257 aa)) folds into the Protein kinase domain. ATP is bound by residues 490-498 (LGVGEFGSV) and K516. D608 (proton acceptor) is an active-site residue. Y746 carries the phosphotyrosine modification.

Belongs to the protein kinase superfamily. Tyr protein kinase family. In terms of tissue distribution, epithelial cells.

The enzyme catalyses L-tyrosyl-[protein] + ATP = O-phospho-L-tyrosyl-[protein] + ADP + H(+). Its function is as follows. May be involved in signal transduction. This is Tyrosine-protein kinase HTK16 (HTK16) from Hydra vulgaris (Hydra).